The chain runs to 44 residues: Conotoxin Rg11a (44 aa).

4 disulfide bridges follow: C1–C15, C8–C22, C14–C30, and C21–C36.

In terms of tissue distribution, expressed by the venom duct.

The protein resides in the secreted. Functionally, neurotoxin. Elicits hypersensibility when injected intracranially in mice. May act via potassium channel currents. The chain is Conotoxin Rg11a from Conus regius (Crown cone).